We begin with the raw amino-acid sequence, 654 residues long: tRNA 5-methylaminomethyl-2-thiouridine biosynthesis bifunctional protein MnmC (654 aa).

Positions 1-235 (MSDFQHAQLD…KREMLGGTYQ (235 aa)) are tRNA (mnm(5)s(2)U34)-methyltransferase. Residues 261–654 (VGGGLAGCAS…LRDLVRGQRG (394 aa)) form an FAD-dependent cmnm(5)s(2)U34 oxidoreductase region.

The protein in the N-terminal section; belongs to the methyltransferase superfamily. tRNA (mnm(5)s(2)U34)-methyltransferase family. This sequence in the C-terminal section; belongs to the DAO family. It depends on FAD as a cofactor.

It is found in the cytoplasm. It carries out the reaction 5-aminomethyl-2-thiouridine(34) in tRNA + S-adenosyl-L-methionine = 5-methylaminomethyl-2-thiouridine(34) in tRNA + S-adenosyl-L-homocysteine + H(+). Catalyzes the last two steps in the biosynthesis of 5-methylaminomethyl-2-thiouridine (mnm(5)s(2)U) at the wobble position (U34) in tRNA. Catalyzes the FAD-dependent demodification of cmnm(5)s(2)U34 to nm(5)s(2)U34, followed by the transfer of a methyl group from S-adenosyl-L-methionine to nm(5)s(2)U34, to form mnm(5)s(2)U34. The protein is tRNA 5-methylaminomethyl-2-thiouridine biosynthesis bifunctional protein MnmC of Pseudomonas aeruginosa (strain UCBPP-PA14).